A 416-amino-acid chain; its full sequence is Serine/threonine-protein kinase 26 (416 aa).

Ala2 is modified (N-acetylalanine). The residue at position 4 (Ser4) is a Phosphoserine. In terms of domain architecture, Protein kinase spans Phe24–Ile274. ATP is bound by residues Ile30–Val38 and Lys53. Residue Asp144 is the Proton acceptor of the active site. Thr178 carries the phosphothreonine; by autocatalysis modification. The tract at residues Glu297–Asn340 is disordered. Phosphoserine occurs at positions 300, 304, 306, 309, and 325. 2 positions are modified to phosphothreonine: Thr327 and Thr328.

The protein belongs to the protein kinase superfamily. STE Ser/Thr protein kinase family. STE20 subfamily. Homodimer. Interacts with PDCD10. Interacts with GOLGA2. Interacts with CTTNBP2NL. Interacts with RIPOR1 (via C-terminus); this interaction occurs in a PDCD10-dependent and Rho-independent manner. Interacts with PDCD10; this interaction is required for the association of STK26 with RIPOR1. Part of the core of STRIPAK complexes composed of PP2A catalytic and scaffolding subunits, the striatins (PP2A regulatory subunits), the striatin-associated proteins MOB4, STRIP1 and STRIP2, PDCD10 and members of the STE20 kinases, such as STK24 and STK26. Mg(2+) serves as cofactor.

It localises to the cytoplasm. Its subcellular location is the golgi apparatus. The enzyme catalyses L-seryl-[protein] + ATP = O-phospho-L-seryl-[protein] + ADP + H(+). The catalysed reaction is L-threonyl-[protein] + ATP = O-phospho-L-threonyl-[protein] + ADP + H(+). Interaction with Golgi matrix protein GOLGA2 leads to autophosphorylation on Thr-178, possibly as a consequence of stabilization of dimer formation. May also be activated by C-terminal cleavage. Functionally, serine/threonine-protein kinase that acts as a mediator of cell growth. Modulates apoptosis. In association with STK24 negatively regulates Golgi reorientation in polarized cell migration upon RHO activation. Phosphorylates ATG4B at 'Ser-383', thereby increasing autophagic flux. Part of the striatin-interacting phosphatase and kinase (STRIPAK) complexes. STRIPAK complexes have critical roles in protein (de)phosphorylation and are regulators of multiple signaling pathways including Hippo, MAPK, nuclear receptor and cytoskeleton remodeling. Different types of STRIPAK complexes are involved in a variety of biological processes such as cell growth, differentiation, apoptosis, metabolism and immune regulation. The sequence is that of Serine/threonine-protein kinase 26 from Homo sapiens (Human).